A 329-amino-acid polypeptide reads, in one-letter code: Protein SPATA31F3 (329 aa).

Residues 11 to 31 form a helical membrane-spanning segment; it reads VGYSVYTYGSIFIIALIIWQV. Residues 58-85 are a coiled coil; the sequence is SDRATRAKRTSKEEAEKLQKLLDTMKSQ. 3 disordered regions span residues 149 to 184, 201 to 250, and 288 to 329; these read ADRS…RSAT, QQLD…AAPT, and KPMT…KRNI. Residues serine 152 and serine 153 each carry the phosphoserine modification. Polar residues-rich tracts occupy residues 154-184 and 201-223; these read ELTY…RSAT and QQLD…SSTD. The segment covering 232–242 has biased composition (basic residues); that stretch reads QKKRKKTKKLA. Basic and acidic residues predominate over residues 293–320; sequence EPEKTHSPVRDQAEGAEKKKKPECDLKA.

It belongs to the SPATA31 family.

It localises to the membrane. The sequence is that of Protein SPATA31F3 from Rattus norvegicus (Rat).